A 281-amino-acid polypeptide reads, in one-letter code: sn-glycerol-3-phosphate transport system permease protein UgpE (281 aa).

A run of 6 helical transmembrane segments spans residues 14–34 (VMLIIGVLLILFPLYVAFVAA), 82–104 (VMAFAITVGKITVSMLSAYAIVY), 113–133 (FFWLIFLTLMLPVEVRIFPTI), 142–162 (LDSYTGLTLPLMASATATFLF), 188–210 (FWDIVLPLSKTNLAALFVITFIY), and 247–267 (WNQVMAAMILTLIPPVAVVLL). The ABC transmembrane type-1 domain maps to 77–268 (LFNSFVMAFA…IPPVAVVLLM (192 aa)).

The protein belongs to the binding-protein-dependent transport system permease family. UgpAE subfamily. As to quaternary structure, the complex is composed of two ATP-binding proteins (UgpC), two transmembrane proteins (UgpA and UgpE) and a solute-binding protein (UgpB).

It localises to the cell inner membrane. In terms of biological role, part of the ABC transporter complex UgpBAEC involved in sn-glycerol-3-phosphate (G3P) import. Probably responsible for the translocation of the substrate across the membrane. The sequence is that of sn-glycerol-3-phosphate transport system permease protein UgpE (ugpE) from Yersinia enterocolitica serotype O:8 / biotype 1B (strain NCTC 13174 / 8081).